Here is a 343-residue protein sequence, read N- to C-terminus: Shematrin-like protein 3 (343 aa).

The N-terminal stretch at 1–16 is a signal peptide; sequence MLKLVCAVVLIATVNA.

In terms of tissue distribution, prismatic layer of shell (at protein level).

The protein localises to the secreted. The sequence is that of Shematrin-like protein 3 from Pinctada maxima (Silver-lipped pearl oyster).